A 760-amino-acid chain; its full sequence is Mitochondrial intermediate peptidase (760 aa).

The N-terminal 19 residues, methionine 1–phenylalanine 19, are a transit peptide targeting the mitochondrion. Histidine 543 is a Zn(2+) binding site. Residue glutamate 544 is part of the active site. Histidine 547 contributes to the Zn(2+) binding site.

It belongs to the peptidase M3 family. It depends on Zn(2+) as a cofactor.

The protein resides in the mitochondrion matrix. The enzyme catalyses Release of an N-terminal octapeptide as second stage of processing of some proteins imported into the mitochondrion.. Functionally, cleaves proteins, imported into the mitochondrion, to their mature size. While most mitochondrial precursor proteins are processed to the mature form in one step by mitochondrial processing peptidase (MPP), the sequential cleavage by MIP of an octapeptide after initial processing by MPP is a required step for a subgroup of nuclear-encoded precursor proteins destined for the matrix or the inner membrane. The chain is Mitochondrial intermediate peptidase (OCT1) from Leucoagaricus gongylophorus (Leaf-cutting ant fungus).